The chain runs to 91 residues: Large ribosomal subunit protein bL27 (91 aa).

A disordered region spans residues 1–22 (MAHKKAGGSSRNGRDSAGRRLG).

Belongs to the bacterial ribosomal protein bL27 family.

The polypeptide is Large ribosomal subunit protein bL27 (Methylocella silvestris (strain DSM 15510 / CIP 108128 / LMG 27833 / NCIMB 13906 / BL2)).